Here is a 213-residue protein sequence, read N- to C-terminus: Peptidyl-tRNA hydrolase (213 aa).

Tyr15 lines the tRNA pocket. The Proton acceptor role is filled by His20. Residues Phe66, Asn68, and Asn114 each coordinate tRNA. The segment at 187–213 (HTTKPPRPKPPRPAAAPVDAPAAPGDQ) is disordered. The segment covering 201–213 (AAPVDAPAAPGDQ) has biased composition (low complexity).

It belongs to the PTH family. Monomer.

It is found in the cytoplasm. The catalysed reaction is an N-acyl-L-alpha-aminoacyl-tRNA + H2O = an N-acyl-L-amino acid + a tRNA + H(+). In terms of biological role, hydrolyzes ribosome-free peptidyl-tRNAs (with 1 or more amino acids incorporated), which drop off the ribosome during protein synthesis, or as a result of ribosome stalling. Functionally, catalyzes the release of premature peptidyl moieties from peptidyl-tRNA molecules trapped in stalled 50S ribosomal subunits, and thus maintains levels of free tRNAs and 50S ribosomes. This chain is Peptidyl-tRNA hydrolase, found in Paracidovorax citrulli (strain AAC00-1) (Acidovorax citrulli).